We begin with the raw amino-acid sequence, 284 residues long: tRNA pseudouridine synthase A (284 aa).

D52 acts as the Nucleophile in catalysis. Substrate is bound at residue Y149.

It belongs to the tRNA pseudouridine synthase TruA family. As to quaternary structure, homodimer.

The enzyme catalyses uridine(38/39/40) in tRNA = pseudouridine(38/39/40) in tRNA. Its function is as follows. Formation of pseudouridine at positions 38, 39 and 40 in the anticodon stem and loop of transfer RNAs. The sequence is that of tRNA pseudouridine synthase A from Orientia tsutsugamushi (strain Boryong) (Rickettsia tsutsugamushi).